Here is a 45-residue protein sequence, read N- to C-terminus: Photosystem II reaction center protein K (45 aa).

Positions 1-8 (MTQIFLIG) are excised as a propeptide. The helical transmembrane segment at 20–40 (IVDVLPIIPVLFLLLAFVWQA) threads the bilayer.

The protein belongs to the PsbK family. In terms of assembly, PSII is composed of 1 copy each of membrane proteins PsbA, PsbB, PsbC, PsbD, PsbE, PsbF, PsbH, PsbI, PsbJ, PsbK, PsbL, PsbM, PsbT, PsbX, PsbY, PsbZ, Psb30/Ycf12, at least 3 peripheral proteins of the oxygen-evolving complex and a large number of cofactors. It forms dimeric complexes.

The protein resides in the plastid. It localises to the chloroplast thylakoid membrane. Functionally, one of the components of the core complex of photosystem II (PSII). PSII is a light-driven water:plastoquinone oxidoreductase that uses light energy to abstract electrons from H(2)O, generating O(2) and a proton gradient subsequently used for ATP formation. It consists of a core antenna complex that captures photons, and an electron transfer chain that converts photonic excitation into a charge separation. The sequence is that of Photosystem II reaction center protein K from Ostreococcus tauri.